The primary structure comprises 190 residues: Potassium-transporting ATPase KdpC subunit (190 aa).

Residues 10-30 (VLFAVLTLICGVIYPYAITGI) traverse the membrane as a helical segment.

Belongs to the KdpC family. The system is composed of three essential subunits: KdpA, KdpB and KdpC.

The protein localises to the cell inner membrane. Functionally, part of the high-affinity ATP-driven potassium transport (or Kdp) system, which catalyzes the hydrolysis of ATP coupled with the electrogenic transport of potassium into the cytoplasm. This subunit acts as a catalytic chaperone that increases the ATP-binding affinity of the ATP-hydrolyzing subunit KdpB by the formation of a transient KdpB/KdpC/ATP ternary complex. This chain is Potassium-transporting ATPase KdpC subunit, found in Herminiimonas arsenicoxydans.